A 78-amino-acid chain; its full sequence is Large ribosomal subunit protein bL28 (78 aa).

The protein belongs to the bacterial ribosomal protein bL28 family.

The chain is Large ribosomal subunit protein bL28 from Alcanivorax borkumensis (strain ATCC 700651 / DSM 11573 / NCIMB 13689 / SK2).